A 271-amino-acid chain; its full sequence is 3-deoxy-manno-octulosonate cytidylyltransferase (271 aa).

This sequence belongs to the KdsB family.

Its subcellular location is the cytoplasm. The catalysed reaction is 3-deoxy-alpha-D-manno-oct-2-ulosonate + CTP = CMP-3-deoxy-beta-D-manno-octulosonate + diphosphate. Its pathway is nucleotide-sugar biosynthesis; CMP-3-deoxy-D-manno-octulosonate biosynthesis; CMP-3-deoxy-D-manno-octulosonate from 3-deoxy-D-manno-octulosonate and CTP: step 1/1. It participates in bacterial outer membrane biogenesis; lipopolysaccharide biosynthesis. Its function is as follows. Activates KDO (a required 8-carbon sugar) for incorporation into bacterial lipopolysaccharide in Gram-negative bacteria. This Leptothrix cholodnii (strain ATCC 51168 / LMG 8142 / SP-6) (Leptothrix discophora (strain SP-6)) protein is 3-deoxy-manno-octulosonate cytidylyltransferase.